The primary structure comprises 323 residues: Sphingolipid delta(4)-desaturase DES1 (323 aa).

Residue G2 is the site of N-myristoyl glycine attachment. 2 consecutive transmembrane segments (helical) span residues 41–61 (PNLI…FYIV) and 68–88 (WVIF…TLGI). The short motif at 89–93 (HEIAH) is the Histidine box-1 element. Residues 107 to 127 (WFGMFANLPIGIPYSVSFKSY) form a helical membrane-spanning segment. The Histidine box-2 signature appears at 128-132 (HMDHH). A run of 3 helical transmembrane segments spans residues 152–172 (FFCT…FYAF), 184–204 (YLEV…YYFL), and 209–229 (LVYM…SGHF). The short motif at 259–263 (HNEHH) is the Histidine box-3 element. S307 carries the post-translational modification Phosphoserine.

It belongs to the fatty acid desaturase type 1 family. DEGS subfamily. Interacts with RLBP1; the interaction increases synthesis of chromophore-precursors by DEGS1. Post-translationally, myristoylation can target the enzyme to the mitochondria leading to an increase in ceramide levels.

It is found in the mitochondrion membrane. Its subcellular location is the endoplasmic reticulum membrane. The enzyme catalyses an N-acylsphinganine + 2 Fe(II)-[cytochrome b5] + O2 + 2 H(+) = an N-acylsphing-4-enine + 2 Fe(III)-[cytochrome b5] + 2 H2O. It catalyses the reaction all-trans-retinol = 11-cis-retinol. It carries out the reaction all-trans-retinol = 9-cis-retinol. The catalysed reaction is all-trans-retinol = 13-cis-retinol. The enzyme catalyses 11-cis-retinol = 13-cis-retinol. It catalyses the reaction 11-cis-retinol = 9-cis-retinol. Its function is as follows. Has sphingolipid-delta-4-desaturase activity. Converts D-erythro-sphinganine to D-erythro-sphingosine (E-sphing-4-enine). Catalyzes the equilibrium isomerization of retinols. The sequence is that of Sphingolipid delta(4)-desaturase DES1 (DEGS1) from Pongo abelii (Sumatran orangutan).